The sequence spans 163 residues: NADH-quinone oxidoreductase subunit I (163 aa).

4Fe-4S ferredoxin-type domains follow at residues 53–83 (LRRYPNGEERCIACKLCEAVCPALAITIEAG) and 94–123 (TLYEIDMFKCIYCGFCEESCPVDSIVETRE). The [4Fe-4S] cluster site is built by C63, C66, C69, C73, C103, C106, C109, and C113.

It belongs to the complex I 23 kDa subunit family. In terms of assembly, NDH-1 is composed of 14 different subunits. Subunits NuoA, H, J, K, L, M, N constitute the membrane sector of the complex. [4Fe-4S] cluster is required as a cofactor.

It is found in the cell inner membrane. The enzyme catalyses a quinone + NADH + 5 H(+)(in) = a quinol + NAD(+) + 4 H(+)(out). NDH-1 shuttles electrons from NADH, via FMN and iron-sulfur (Fe-S) centers, to quinones in the respiratory chain. The immediate electron acceptor for the enzyme in this species is believed to be ubiquinone. Couples the redox reaction to proton translocation (for every two electrons transferred, four hydrogen ions are translocated across the cytoplasmic membrane), and thus conserves the redox energy in a proton gradient. In Alkalilimnicola ehrlichii (strain ATCC BAA-1101 / DSM 17681 / MLHE-1), this protein is NADH-quinone oxidoreductase subunit I.